The primary structure comprises 369 residues: GTPase Obg (369 aa).

In terms of domain architecture, Obg spans 1 to 159; the sequence is MKFIDEARIE…RMLKLELKVL (159 aa). The tract at residues 128-147 is disordered; the sequence is LHFKSSTNRAPRQKTDGKPG. Residues 160 to 334 form the OBG-type G domain; sequence ADVGLLGMPN…LCYAIYDYLA (175 aa). Residues 166–173, 191–195, 213–216, 284–287, and 315–317 each bind GTP; these read GMPNAGKS, FTTLA, DIPG, NKLD, and SAL. Residues serine 173 and threonine 193 each coordinate Mg(2+).

Belongs to the TRAFAC class OBG-HflX-like GTPase superfamily. OBG GTPase family. As to quaternary structure, monomer. Mg(2+) serves as cofactor.

It localises to the cytoplasm. Functionally, an essential GTPase which binds GTP, GDP and possibly (p)ppGpp with moderate affinity, with high nucleotide exchange rates and a fairly low GTP hydrolysis rate. Plays a role in control of the cell cycle, stress response, ribosome biogenesis and in those bacteria that undergo differentiation, in morphogenesis control. In Burkholderia multivorans (strain ATCC 17616 / 249), this protein is GTPase Obg.